The chain runs to 344 residues: N-acetyl-gamma-glutamyl-phosphate reductase (344 aa).

Residue cysteine 150 is part of the active site.

It belongs to the NAGSA dehydrogenase family. Type 1 subfamily.

The protein resides in the cytoplasm. The enzyme catalyses N-acetyl-L-glutamate 5-semialdehyde + phosphate + NADP(+) = N-acetyl-L-glutamyl 5-phosphate + NADPH + H(+). It functions in the pathway amino-acid biosynthesis; L-arginine biosynthesis; N(2)-acetyl-L-ornithine from L-glutamate: step 3/4. Functionally, catalyzes the NADPH-dependent reduction of N-acetyl-5-glutamyl phosphate to yield N-acetyl-L-glutamate 5-semialdehyde. In Pseudomonas savastanoi pv. phaseolicola (strain 1448A / Race 6) (Pseudomonas syringae pv. phaseolicola (strain 1448A / Race 6)), this protein is N-acetyl-gamma-glutamyl-phosphate reductase.